The following is a 287-amino-acid chain: 4-hydroxybenzoate octaprenyltransferase (287 aa).

9 helical membrane passes run 22-42 (IGTLLLLWPTLWALWIAAQGF), 45-65 (LGVLIVFSAGVFLMRSAGCVI), 91-111 (TSTEAIILFFILAIVSFLLVL), 114-134 (NSLTIQLSFAGLLLAFAYPFM), 139-159 (QLPQLVLGLAFSWSIPMAFAA), 161-181 (ANALPAVVWIIFAVNIIWTIA), 212-232 (IIIALLQLTSLILLSLLGWLE), 236-256 (WIYFIALLVVGGLFLRQQLQI), and 267-287 (AFLDNNYVGFVIFAGLFLGYL).

This sequence belongs to the UbiA prenyltransferase family. It depends on Mg(2+) as a cofactor.

It is found in the cell inner membrane. It catalyses the reaction all-trans-octaprenyl diphosphate + 4-hydroxybenzoate = 4-hydroxy-3-(all-trans-octaprenyl)benzoate + diphosphate. Its pathway is cofactor biosynthesis; ubiquinone biosynthesis. Catalyzes the prenylation of para-hydroxybenzoate (PHB) with an all-trans polyprenyl group. Mediates the second step in the final reaction sequence of ubiquinone-8 (UQ-8) biosynthesis, which is the condensation of the polyisoprenoid side chain with PHB, generating the first membrane-bound Q intermediate 3-octaprenyl-4-hydroxybenzoate. The chain is 4-hydroxybenzoate octaprenyltransferase from Psychromonas ingrahamii (strain DSM 17664 / CCUG 51855 / 37).